Consider the following 582-residue polypeptide: 2-succinyl-5-enolpyruvyl-6-hydroxy-3-cyclohexene-1-carboxylate synthase (582 aa).

It belongs to the TPP enzyme family. MenD subfamily. Homodimer. It depends on Mg(2+) as a cofactor. Mn(2+) serves as cofactor. Thiamine diphosphate is required as a cofactor.

The enzyme catalyses isochorismate + 2-oxoglutarate + H(+) = 5-enolpyruvoyl-6-hydroxy-2-succinyl-cyclohex-3-ene-1-carboxylate + CO2. Its pathway is quinol/quinone metabolism; 1,4-dihydroxy-2-naphthoate biosynthesis; 1,4-dihydroxy-2-naphthoate from chorismate: step 2/7. It participates in cofactor biosynthesis; phylloquinone biosynthesis. In terms of biological role, catalyzes the thiamine diphosphate-dependent decarboxylation of 2-oxoglutarate and the subsequent addition of the resulting succinic semialdehyde-thiamine pyrophosphate anion to isochorismate to yield 2-succinyl-5-enolpyruvyl-6-hydroxy-3-cyclohexene-1-carboxylate (SEPHCHC). The protein is 2-succinyl-5-enolpyruvyl-6-hydroxy-3-cyclohexene-1-carboxylate synthase of Prochlorococcus marinus (strain MIT 9313).